Consider the following 288-residue polypeptide: Proline iminopeptidase (288 aa).

The AB hydrolase-1 domain maps to Pro-27–Pro-274. Catalysis depends on Ser-101, which acts as the Nucleophile. Residue Asp-240 is part of the active site. His-267 functions as the Proton donor in the catalytic mechanism.

The protein belongs to the peptidase S33 family. As to quaternary structure, monomer.

It localises to the cytoplasm. The catalysed reaction is Release of N-terminal proline from a peptide.. Completely inhibited by p-chloromercuribenzoate (PCMB) and heavy metal salts. Partially inhibited by proline and proline derivatives with proline as the amino terminus. Enzyme inactivated by PCMB is reactivated by incubation with 2-mercaptoethanol. Its function is as follows. Releases the N-terminal proline from various substrates including at least dipeptides Pro-Pro, Pro-Gln, Pro-Trp and Pro-Tyr. Also acts on amides (Pro-beta NA) and oligopeptides including Pro-Leu-GlyNH2, Pro-Leu-Gly, Pro-Phe-Gly-Lys, Pro-Pro-Ala-OBut and Pro-Pro-Gly-(Pro-Pro-Gly)(4). Higher activity toward small peptides (up to three residues), but very low activity for longer peptides. Has no activity against p-nitrophenyl acetate, poly_L-proline, Met-Pro or amino acyl amides other than Pro-betaNA (Pyr-betaNA, Phe-betaNA, Cys-betaNA, Met-betaNA, Leu-betaNA, Ala-betaNA and Z-Gly-Pro-betaNA). This chain is Proline iminopeptidase (pip), found in Heyndrickxia coagulans (Weizmannia coagulans).